Reading from the N-terminus, the 396-residue chain is Elongation factor Tu (396 aa).

The 197-residue stretch at 10-206 folds into the tr-type G domain; that stretch reads KPHVNVGTIG…ALDSYIPTPE (197 aa). The tract at residues 19 to 26 is G1; that stretch reads GHVDHGKT. 19 to 26 is a GTP binding site; sequence GHVDHGKT. Thr26 provides a ligand contact to Mg(2+). The tract at residues 60–64 is G2; it reads GITIN. The segment at 81–84 is G3; sequence DCPG. GTP-binding positions include 81 to 85 and 136 to 139; these read DCPGH and NKCD. The tract at residues 136–139 is G4; it reads NKCD. Positions 174–176 are G5; the sequence is SAL.

The protein belongs to the TRAFAC class translation factor GTPase superfamily. Classic translation factor GTPase family. EF-Tu/EF-1A subfamily. In terms of assembly, monomer.

It localises to the cytoplasm. It carries out the reaction GTP + H2O = GDP + phosphate + H(+). Functionally, GTP hydrolase that promotes the GTP-dependent binding of aminoacyl-tRNA to the A-site of ribosomes during protein biosynthesis. This chain is Elongation factor Tu, found in Azoarcus sp. (strain BH72).